The sequence spans 1358 residues: DNA-directed RNA polymerase subunit beta (1358 aa).

The protein belongs to the RNA polymerase beta chain family. As to quaternary structure, the RNAP catalytic core consists of 2 alpha, 1 beta, 1 beta' and 1 omega subunit. When a sigma factor is associated with the core the holoenzyme is formed, which can initiate transcription.

The catalysed reaction is RNA(n) + a ribonucleoside 5'-triphosphate = RNA(n+1) + diphosphate. Functionally, DNA-dependent RNA polymerase catalyzes the transcription of DNA into RNA using the four ribonucleoside triphosphates as substrates. The sequence is that of DNA-directed RNA polymerase subunit beta from Thioalkalivibrio sulfidiphilus (strain HL-EbGR7).